The chain runs to 156 residues: Small ribosomal subunit protein uS7 (156 aa).

This sequence belongs to the universal ribosomal protein uS7 family. In terms of assembly, part of the 30S ribosomal subunit. Contacts proteins S9 and S11.

Its function is as follows. One of the primary rRNA binding proteins, it binds directly to 16S rRNA where it nucleates assembly of the head domain of the 30S subunit. Is located at the subunit interface close to the decoding center, probably blocks exit of the E-site tRNA. The protein is Small ribosomal subunit protein uS7 of Oleidesulfovibrio alaskensis (strain ATCC BAA-1058 / DSM 17464 / G20) (Desulfovibrio alaskensis).